Here is a 133-residue protein sequence, read N- to C-terminus: uncharacterized protein (133 aa).

The 130-residue stretch at 1 to 130 (MPNIVEIAVS…GIIHVIDNVI (130 aa)) folds into the FAS1 domain.

This is an uncharacterized protein from Synechocystis sp. (strain ATCC 27184 / PCC 6803 / Kazusa).